Reading from the N-terminus, the 650-residue chain is 1-deoxy-D-xylulose-5-phosphate synthase (650 aa).

Thiamine diphosphate contacts are provided by residues H73 and 113–115 (SHA). Position 145 (D145) interacts with Mg(2+). Thiamine diphosphate is bound by residues 146–147 (GA), N175, Y287, and E369. N175 contacts Mg(2+). The interval 629–650 (SARPLPEDAERVPMRAEDDEQA) is disordered. The segment covering 633–644 (LPEDAERVPMRA) has biased composition (basic and acidic residues).

It belongs to the transketolase family. DXPS subfamily. In terms of assembly, homodimer. Mg(2+) serves as cofactor. The cofactor is thiamine diphosphate.

The catalysed reaction is D-glyceraldehyde 3-phosphate + pyruvate + H(+) = 1-deoxy-D-xylulose 5-phosphate + CO2. Its pathway is metabolic intermediate biosynthesis; 1-deoxy-D-xylulose 5-phosphate biosynthesis; 1-deoxy-D-xylulose 5-phosphate from D-glyceraldehyde 3-phosphate and pyruvate: step 1/1. Its function is as follows. Catalyzes the acyloin condensation reaction between C atoms 2 and 3 of pyruvate and glyceraldehyde 3-phosphate to yield 1-deoxy-D-xylulose-5-phosphate (DXP). This is 1-deoxy-D-xylulose-5-phosphate synthase from Clavibacter sepedonicus (Clavibacter michiganensis subsp. sepedonicus).